The primary structure comprises 104 residues: NADH-quinone oxidoreductase subunit K (104 aa).

Transmembrane regions (helical) follow at residues 4 to 24, 31 to 51, and 67 to 87; these read VPAS…LFGA, VIVL…LVAF, and LFTM…LIAL.

This sequence belongs to the complex I subunit 4L family. In terms of assembly, NDH-1 is composed of 14 different subunits. Subunits NuoA, H, J, K, L, M, N constitute the membrane sector of the complex.

It localises to the cell membrane. It catalyses the reaction a quinone + NADH + 5 H(+)(in) = a quinol + NAD(+) + 4 H(+)(out). In terms of biological role, NDH-1 shuttles electrons from NADH, via FMN and iron-sulfur (Fe-S) centers, to quinones in the respiratory chain. The immediate electron acceptor for the enzyme in this species is believed to be a menaquinone. Couples the redox reaction to proton translocation (for every two electrons transferred, four hydrogen ions are translocated across the cytoplasmic membrane), and thus conserves the redox energy in a proton gradient. This chain is NADH-quinone oxidoreductase subunit K, found in Bacillus cereus (strain G9842).